The following is a 744-amino-acid chain: Endonuclease MutS2 (744 aa).

Position 315-322 (315-322 (GPNMGGKT)) interacts with ATP. The 76-residue stretch at 668 to 743 (VDLRGLTVAE…GHGVTVVALR (76 aa)) folds into the Smr domain.

The protein belongs to the DNA mismatch repair MutS family. MutS2 subfamily. In terms of assembly, homodimer. Interacts with MutL. Binds to stalled ribosomes, contacting rRNA.

Its activity is regulated as follows. Nuclease activity is stimulated by interaction with MutL. ATPase activity is stimulated by dsDNA. Its function is as follows. Endonuclease that is involved in the suppression of homologous recombination and may thus have a key role in the control of bacterial genetic diversity. Cleaves the phosphate backbone of oligodeoxynucleotides non-sequence-specifically at the 3' side of the phosphates. Preferably incises the branched DNA structures, especially the D-loop structure over the Holliday junction. Has ATPase activity. Binds to dsDNA but not to ssDNA. In terms of biological role, acts as a ribosome collision sensor, splitting the ribosome into its 2 subunits. Detects stalled/collided 70S ribosomes which it binds and splits by an ATP-hydrolysis driven conformational change. Acts upstream of the ribosome quality control system (RQC), a ribosome-associated complex that mediates the extraction of incompletely synthesized nascent chains from stalled ribosomes and their subsequent degradation. Probably generates substrates for RQC. In Thermus thermophilus (strain ATCC 27634 / DSM 579 / HB8), this protein is Endonuclease MutS2.